The following is a 223-amino-acid chain: MNKPLLWISVLTSLLEAFAHTDLSGKVFVFPRESVTDHVNLITPLEKPLQNFTLCFRAYSDLSRAYSLFSYNTQGRDNELLVYKERVGEYSLYIGRHKVTSKVIEKFPAPVHICVSWESSSGIAEFWINGTPLVKKGLRQGYFVEAQPKIVLGQEQDSYGGKFDRSQSFVGEIGDLYMWDSVLPPENILSAYQGTPLPANILDWQALNYEIRGYVIIKPLVWV.

An N-terminal signal peptide occupies residues 1-19 (MNKPLLWISVLTSLLEAFA). Residues 24-223 (SGKVFVFPRE…YVIIKPLVWV (200 aa)) form the Pentraxin (PTX) domain. Residue N51 is glycosylated (N-linked (GlcNAc...) asparagine). Cysteines 55 and 114 form a disulfide. D77, N78, E155, Q156, D157, and Q167 together coordinate Ca(2+).

Belongs to the pentraxin family. As to quaternary structure, homopentamer. Pentraxin (or pentaxin) have a discoid arrangement of 5 non-covalently bound subunits. Ca(2+) serves as cofactor. Post-translationally, N-glycosylated with a complex biantennary oligosaccharide chain with a sialic acid at the end (disialo-SAP). Monosialo-SAP as well as asioalo-SAP are also detected. In terms of tissue distribution, found in serum and urine.

It is found in the secreted. Functionally, can interact with DNA and histones and may scavenge nuclear material released from damaged circulating cells. May also function as a calcium-dependent lectin. The protein is Serum amyloid P-component (APCS) of Homo sapiens (Human).